The chain runs to 1035 residues: Beta-galactosidase (1035 aa).

Substrate contacts are provided by asparagine 101 and aspartate 199. Aspartate 199 lines the Na(+) pocket. Residues glutamate 415, histidine 417, and glutamate 460 each contribute to the Mg(2+) site. Substrate contacts are provided by residues glutamate 460 and 540 to 543 (EYAH). The active-site Proton donor is the glutamate 460. The Nucleophile role is filled by glutamate 540. Position 600 (asparagine 600) interacts with Mg(2+). Positions 604 and 607 each coordinate Na(+). Substrate-binding residues include asparagine 607 and tryptophan 1011.

The protein belongs to the glycosyl hydrolase 2 family. As to quaternary structure, homotetramer. Mg(2+) is required as a cofactor. The cofactor is Na(+).

The catalysed reaction is Hydrolysis of terminal non-reducing beta-D-galactose residues in beta-D-galactosides.. The chain is Beta-galactosidase from Psychromonas ingrahamii (strain DSM 17664 / CCUG 51855 / 37).